Reading from the N-terminus, the 603-residue chain is Elongation factor 4 (603 aa).

The tr-type G domain maps to 7-189; it reads KKIRNFCIIA…SVVKNVPPPE (183 aa). GTP is bound by residues 19–24 and 136–139; these read DHGKST and NKID.

The protein belongs to the TRAFAC class translation factor GTPase superfamily. Classic translation factor GTPase family. LepA subfamily.

The protein resides in the cell membrane. The catalysed reaction is GTP + H2O = GDP + phosphate + H(+). In terms of biological role, required for accurate and efficient protein synthesis under certain stress conditions. May act as a fidelity factor of the translation reaction, by catalyzing a one-codon backward translocation of tRNAs on improperly translocated ribosomes. Back-translocation proceeds from a post-translocation (POST) complex to a pre-translocation (PRE) complex, thus giving elongation factor G a second chance to translocate the tRNAs correctly. Binds to ribosomes in a GTP-dependent manner. The sequence is that of Elongation factor 4 from Acetivibrio thermocellus (strain ATCC 27405 / DSM 1237 / JCM 9322 / NBRC 103400 / NCIMB 10682 / NRRL B-4536 / VPI 7372) (Clostridium thermocellum).